A 437-amino-acid polypeptide reads, in one-letter code: Adenosylhomocysteinase (437 aa).

Substrate-binding residues include Thr58, Asp133, and Glu158. 159 to 161 (TTT) contacts NAD(+). Residues Lys188 and Asp192 each contribute to the substrate site. NAD(+) contacts are provided by residues Asn193, 224–229 (GDVGKG), Glu245, 301–303 (VGH), and Asn348.

The protein belongs to the adenosylhomocysteinase family. Homotetramer. Requires NAD(+) as cofactor.

It carries out the reaction S-adenosyl-L-homocysteine + H2O = L-homocysteine + adenosine. Its pathway is amino-acid biosynthesis; L-homocysteine biosynthesis; L-homocysteine from S-adenosyl-L-homocysteine: step 1/1. In terms of biological role, adenosylhomocysteine is a competitive inhibitor of S-adenosyl-L-methionine-dependent methyl transferase reactions; therefore adenosylhomocysteinase may play a key role in the control of methylations via regulation of the intracellular concentration of adenosylhomocysteine. This is Adenosylhomocysteinase (ahcy-1) from Caenorhabditis elegans.